The sequence spans 240 residues: NAD(P)H-quinone oxidoreductase subunit K (240 aa).

[4Fe-4S] cluster contacts are provided by cysteine 55, cysteine 56, cysteine 120, and cysteine 151.

Belongs to the complex I 20 kDa subunit family. NDH-1 can be composed of about 15 different subunits; different subcomplexes with different compositions have been identified which probably have different functions. Requires [4Fe-4S] cluster as cofactor.

It is found in the cellular thylakoid membrane. The catalysed reaction is a plastoquinone + NADH + (n+1) H(+)(in) = a plastoquinol + NAD(+) + n H(+)(out). The enzyme catalyses a plastoquinone + NADPH + (n+1) H(+)(in) = a plastoquinol + NADP(+) + n H(+)(out). NDH-1 shuttles electrons from an unknown electron donor, via FMN and iron-sulfur (Fe-S) centers, to quinones in the respiratory and/or the photosynthetic chain. The immediate electron acceptor for the enzyme in this species is believed to be plastoquinone. Couples the redox reaction to proton translocation, and thus conserves the redox energy in a proton gradient. Cyanobacterial NDH-1 also plays a role in inorganic carbon-concentration. The polypeptide is NAD(P)H-quinone oxidoreductase subunit K (Trichodesmium erythraeum (strain IMS101)).